We begin with the raw amino-acid sequence, 309 residues long: L-aminoadipate-semialdehyde dehydrogenase-phosphopantetheinyl transferase (309 aa).

CoA is bound by residues R47, 86-91, and 108-111; these read RTSKGK and NISH. Positions 129 and 181 each coordinate Mg(2+). 181-185 lines the CoA pocket; that stretch reads ESFIK.

Belongs to the P-Pant transferase superfamily. AcpS family. Monomer. Mg(2+) serves as cofactor.

The protein resides in the cytoplasm. Its subcellular location is the cytosol. It catalyses the reaction apo-[ACP] + CoA = holo-[ACP] + adenosine 3',5'-bisphosphate + H(+). It carries out the reaction apo-[ACP] + acetyl-CoA = acetyl-[ACP] + adenosine 3',5'-bisphosphate + H(+). Functionally, catalyzes the post-translational modification of target proteins by phosphopantetheine. Can transfer the 4'-phosphopantetheine moiety from coenzyme A, regardless of whether the CoA is presented in the free thiol form or as an acetyl thioester, to a serine residue of a broad range of acceptors including the acyl carrier domain of FASN. This Mus musculus (Mouse) protein is L-aminoadipate-semialdehyde dehydrogenase-phosphopantetheinyl transferase (Aasdhppt).